The sequence spans 78 residues: Alpha-neurotoxin homolog 1 (78 aa).

An N-terminal signal peptide occupies residues 1–21; it reads MKTLLLTLVVVTIVCLDFGYT. Disulfide bonds link Cys-24–Cys-42, Cys-37–Cys-57, Cys-59–Cys-70, and Cys-71–Cys-76.

The protein belongs to the three-finger toxin family. Short-chain subfamily. Orphan group XII sub-subfamily. As to expression, expressed by the venom gland.

It is found in the secreted. This chain is Alpha-neurotoxin homolog 1, found in Micrurus corallinus (Brazilian coral snake).